The primary structure comprises 222 residues: Ribonuclease T (222 aa).

The Exonuclease domain occupies 20-194 (VVIDVETAGF…YDTERTAELF (175 aa)). Positions 23, 25, 181, and 186 each coordinate Mg(2+). The active-site Proton donor/acceptor is His181.

It belongs to the RNase T family. In terms of assembly, homodimer. Requires Mg(2+) as cofactor.

Functionally, trims short 3' overhangs of a variety of RNA species, leaving a one or two nucleotide 3' overhang. Responsible for the end-turnover of tRNA: specifically removes the terminal AMP residue from uncharged tRNA (tRNA-C-C-A). Also appears to be involved in tRNA biosynthesis. This chain is Ribonuclease T, found in Shewanella oneidensis (strain ATCC 700550 / JCM 31522 / CIP 106686 / LMG 19005 / NCIMB 14063 / MR-1).